A 420-amino-acid polypeptide reads, in one-letter code: Histidine--tRNA ligase (420 aa).

Belongs to the class-II aminoacyl-tRNA synthetase family. In terms of assembly, homodimer.

It is found in the cytoplasm. The enzyme catalyses tRNA(His) + L-histidine + ATP = L-histidyl-tRNA(His) + AMP + diphosphate + H(+). The protein is Histidine--tRNA ligase of Anaplasma phagocytophilum (strain HZ).